The chain runs to 160 residues: Protransforming growth factor alpha (160 aa).

An N-terminal signal peptide occupies residues 1–23 (MVPSAGQLALFALGIVLAACQAL). The propeptide at 24–39 (ENSTSPLSADPPVAAA) is removed in mature form. Residues 24 to 98 (ENSTSPLSAD…AVVAASQKKQ (75 aa)) are Extracellular-facing. N-linked (GlcNAc...) asparagine glycosylation is present at Asn25. Positions 43-83 (HFNDCPDSHTQFCFHGTCRFLVQEDKPACVCHSGYVGARCE) constitute an EGF-like domain. 3 disulfide bridges follow: Cys47–Cys60, Cys55–Cys71, and Cys73–Cys82. The propeptide at 90 to 160 (VVAASQKKQA…TACCHSETVV (71 aa)) is removed in mature form. A helical transmembrane segment spans residues 99–124 (AITALVVVSIVALAVLIITCVLIHCC). The Cytoplasmic portion of the chain corresponds to 125-160 (QVRKHCEWCRALICRHEKPSALLKGRTACCHSETVV). 2 S-palmitoyl cysteine lipidation sites follow: Cys153 and Cys154.

As to quaternary structure, interacts with the PDZ domains of MAGI3, SDCBP and SNTA1. The interaction with SDCBP, is required for the targeting to the cell surface. In the endoplasmic reticulum, in its immature form (i.e. with a prosegment and lacking full N-glycosylation), interacts with CNIH. In the Golgi apparatus, may form a complex with CNIH and GORASP2. Interacts (via cytoplasmic C-terminal domain) with NKD2. Isoform 1, isoform 3 and isoform 4 are expressed in keratinocytes and tumor-derived cell lines.

It localises to the secreted. The protein resides in the extracellular space. The protein localises to the cell membrane. Functionally, TGF alpha is a mitogenic polypeptide that is able to bind to the EGF receptor/EGFR and to act synergistically with TGF beta to promote anchorage-independent cell proliferation in soft agar. This is Protransforming growth factor alpha (TGFA) from Homo sapiens (Human).